We begin with the raw amino-acid sequence, 79 residues long: Cytochrome b-c1 complex subunit 10 (79 aa).

At 1 to 23 (MISFFPNKPMYHVQPHISFITPE) the chain is on the mitochondrial matrix side. Residues 24-47 (RTMKTIPAFSRWAFAAVAGVFVFA) traverse the membrane as a helical segment. The Mitochondrial intermembrane portion of the chain corresponds to 48-79 (MQVPKVKTTILQPIAFIGDHFKDKTPEEDKWL).

The protein belongs to the UQCR11/QCR10 family. As to quaternary structure, component of the ubiquinol-cytochrome c oxidoreductase (cytochrome b-c1 complex, complex III, CIII), a multisubunit enzyme composed of 3 respiratory subunits cytochrome b, cytochrome c1 and Rieske protein, 2 core protein subunits, and additional low-molecular weight protein subunits. The complex exists as an obligatory dimer and forms supercomplexes (SCs) in the inner mitochondrial membrane with cytochrome c oxidase (complex IV, CIV).

It localises to the mitochondrion inner membrane. Functionally, component of the ubiquinol-cytochrome c oxidoreductase, a multisubunit transmembrane complex that is part of the mitochondrial electron transport chain which drives oxidative phosphorylation. The respiratory chain contains 3 multisubunit complexes succinate dehydrogenase (complex II, CII), ubiquinol-cytochrome c oxidoreductase (cytochrome b-c1 complex, complex III, CIII) and cytochrome c oxidase (complex IV, CIV), that cooperate to transfer electrons derived from NADH and succinate to molecular oxygen, creating an electrochemical gradient over the inner membrane that drives transmembrane transport and the ATP synthase. The cytochrome b-c1 complex catalyzes electron transfer from ubiquinol to cytochrome c, linking this redox reaction to translocation of protons across the mitochondrial inner membrane, with protons being carried across the membrane as hydrogens on the quinol. In the process called Q cycle, 2 protons are consumed from the matrix, 4 protons are released into the intermembrane space and 2 electrons are passed to cytochrome c. QCR10 has a role in CIII assembly and RIP1 stability. The sequence is that of Cytochrome b-c1 complex subunit 10 from Schizosaccharomyces pombe (strain 972 / ATCC 24843) (Fission yeast).